An 883-amino-acid polypeptide reads, in one-letter code: MQKIMHISVLLSPVLWGLIFGVSSNSIQIGGLFPRGADQEYSAFRVGMVQFSTSEFRLTPHIDNLEVANSFAVTNAFCSQFSRGVYAIFGFYDKKSVNTITSFCGTLHVSFITPSFPTDGTHPFVIQMRPDLKGALLSLIEYYQWDKFAYLYDSDRGLSTLQAVLDSAAEKKWQVTAINVGNINNDKKDEMYRSLFQDLELKKERRVILDCERDKVNDIVDQVITIGKHVKGYHYIIANLGFTDGDLLKIQFGGANVSGFQIVDYDDSLVSKFIERWSTLEEKEYPGAHTTTIKYTSALTYDAVQVMTEAFRNLRKQRIEISRRGNAGDCLANPAVPWGQGVEIERALKQVQVEGLSGNIKFDQNGKRINYTINIMELKTNGPRKIGYWSEVDKMVVTLTELPSGNDTSGLENKTVVVTTILESPYVMMKKNHEMLEGNERYEGYCVDLAAEIAKHCGFKYKLTIVGDGKYGARDADTKIWNGMVGELVYGKADIAIAPLTITLVREEVIDFSKPFMSLGISIMIKKPQKSKPGVFSFLDPLAYEIWMCIVFAYIGVSVVLFLVSRFSPYEWHTEEFEDGRETQSSESTNEFGIFNSLWFSLGAFMQQGCDISPRSLSGRIVGGVWWFFTLIIISSYTANLAAFLTVERMVSPIESAEDLSKQTEIAYGTLDSGSTKEFFRRSKIAVFDKMWTYMRSAEPSVFVRTTAEGVARVRKSKGKYAYLLESTMNEYIEQRKPCDTMKVGGNLDSKGYGIATPKGSSLRNAVNLAVLKLNEQGLLDKLKNKWWYDKGECGSGGGDSKEKTSALSLSNVAGVFYILVGGLGLAMLVALIEFCYKSRAEAKRMKVAKNAQNINPSSSQNSQNFATYKEGYNVYGIESVKI.

An N-terminal signal peptide occupies residues 1 to 24 (MQKIMHISVLLSPVLWGLIFGVSS). The Extracellular segment spans residues 25 to 543 (NSIQIGGLFP…GVFSFLDPLA (519 aa)). Cys78 and Cys330 are oxidised to a cystine. 4 N-linked (GlcNAc...) asparagine glycosylation sites follow: Asn256, Asn370, Asn406, and Asn413. Residues Pro499, Thr501, and Arg506 each contribute to the L-glutamate site. The helical transmembrane segment at 544–564 (YEIWMCIVFAYIGVSVVLFLV) threads the bilayer. Topologically, residues 565 to 591 (SRFSPYEWHTEEFEDGRETQSSESTNE) are cytoplasmic. Residues 592 to 607 (FGIFNSLWFSLGAFMQ) constitute an intramembrane region (helical; Pore-forming). An intramembrane segment occupies 608–610 (QGC). Cys610 is lipidated: S-palmitoyl cysteine. The Cytoplasmic portion of the chain corresponds to 611–616 (DISPRS). Residues 617-637 (LSGRIVGGVWWFFTLIIISSY) form a helical membrane-spanning segment. The Extracellular segment spans residues 638-812 (TANLAAFLTV…EKTSALSLSN (175 aa)). The L-glutamate site is built by Ser675 and Thr676. Position 683 is a phosphoserine; by PKC (Ser683). At Ser717 the chain carries Phosphoserine; by PKG. Residue Glu726 participates in L-glutamate binding. Cys739 and Cys794 are disulfide-bonded. The helical transmembrane segment at 813 to 833 (VAGVFYILVGGLGLAMLVALI) threads the bilayer. Over 834-883 (EFCYKSRAEAKRMKVAKNAQNINPSSSQNSQNFATYKEGYNVYGIESVKI) the chain is Cytoplasmic. A lipid anchor (S-palmitoyl cysteine) is attached at Cys836. Ser860 and Ser863 each carry phosphoserine. A required for interaction with IQSEC1 region spans residues 867–877 (ATYKEGYNVYG). A Phosphotyrosine modification is found at Tyr876. Phosphoserine is present on Ser880.

This sequence belongs to the glutamate-gated ion channel (TC 1.A.10.1) family. GRIA2 subfamily. In terms of assembly, homotetramer or heterotetramer of pore-forming glutamate receptor subunits. Tetramers may be formed by the dimerization of dimers. May interact with MPP4. Forms a ternary complex with GRIP1 and CSPG4. Interacts with ATAD1 in an ATP-dependent manner. ATAD1-catalyzed ATP hydrolysis disrupts binding to ATAD1 and to GRIP1 and leads to AMPAR complex disassembly. Interacts with GRIP1 and GRIP2. Interacts with NSF via its C-terminus. Isoform 1, but not isoform 3, interacts with PICK1. Interacts with CACNG2. Interacts with GRIA1 and SYNDIG1. Part of a complex containing GRIA2, NSF and NAPA and/or NAPB. Interacts with SNX27 (via PDZ domain); the interaction is required for recycling to the plasma membrane when endocytosed and prevent degradation in lysosomes. Interacts with LRFN1. Found in a complex with GRIA1, GRIA3, GRIA4, CNIH2, CNIH3, CACNG2, CACNG3, CACNG4, CACNG5, CACNG7 and CACNG8. Interacts with CACNG5. Interacts with OLFM2. Interacts with AP4B1, AP4E1 and AP4M1; probably indirect it mediates the somatodendritic localization of GRIA2 in neurons. Forms a complex with GRIP1, NSG1 and STX12; controls the intracellular fate of AMPAR and the endosomal sorting of the GRIA2 subunit toward recycling and membrane targeting. Interacts with IQSEC1; the interaction is required for ARF6 activation. Interacts (heterotetramer form) with CNIH2 and CNIH3; this interaction promotes expression at the plasma membrane and extensively modulates their gating properties by slowing deactivation and desensitization kinetics. Palmitoylated. Depalmitoylated upon L-glutamate stimulation. Cys-610 palmitoylation leads to Golgi retention and decreased cell surface expression. In contrast, Cys-836 palmitoylation does not affect cell surface expression but regulates stimulation-dependent endocytosis. Post-translationally, ubiquitinated by RNF167, leading to its degradation. In terms of processing, phosphorylation at Tyr-876 is required for interaction with IQSEC1 and ARF6 activation, which in turn triggers AMPAR internalization for persistent synaptic depression. N-glycosylated.

The protein resides in the cell membrane. It is found in the postsynaptic cell membrane. Its subcellular location is the postsynaptic density membrane. The enzyme catalyses Ca(2+)(in) = Ca(2+)(out). It catalyses the reaction Na(+)(in) = Na(+)(out). Its function is as follows. Ionotropic glutamate receptor that functions as a ligand-gated cation channel, gated by L-glutamate and glutamatergic agonists such as alpha-amino-3-hydroxy-5-methyl-4-isoxazolepropionic acid (AMPA), quisqualic acid, and kainic acid. L-glutamate acts as an excitatory neurotransmitter at many synapses in the central nervous system and plays an important role in fast excitatory synaptic transmission. Binding of the excitatory neurotransmitter L-glutamate induces a conformation change, leading to the opening of the cation channel, and thereby converts the chemical signal to an electrical impulse upon entry of monovalent and divalent cations such as sodium and calcium. The receptor then desensitizes rapidly and enters in a transient inactive state, characterized by the presence of bound agonist. In the presence of CACNG4 or CACNG7 or CACNG8, shows resensitization which is characterized by a delayed accumulation of current flux upon continued application of L-glutamate. Through complex formation with NSG1, GRIP1 and STX12 controls the intracellular fate of AMPAR and the endosomal sorting of the GRIA2 subunit toward recycling and membrane targeting. This Homo sapiens (Human) protein is Glutamate receptor 2.